A 262-amino-acid chain; its full sequence is Ribose-5-phosphate isomerase A (262 aa).

Substrate is bound by residues 33–36, 89–92, and 102–105; these read TGST, DGAD, and KGGG. The active-site Proton acceptor is glutamate 111. Substrate is bound at residue lysine 129.

This sequence belongs to the ribose 5-phosphate isomerase family. In terms of assembly, homodimer.

The enzyme catalyses aldehydo-D-ribose 5-phosphate = D-ribulose 5-phosphate. Its pathway is carbohydrate degradation; pentose phosphate pathway; D-ribose 5-phosphate from D-ribulose 5-phosphate (non-oxidative stage): step 1/1. Functionally, catalyzes the reversible conversion of ribose-5-phosphate to ribulose 5-phosphate. The sequence is that of Ribose-5-phosphate isomerase A from Cereibacter sphaeroides (strain KD131 / KCTC 12085) (Rhodobacter sphaeroides).